The primary structure comprises 345 residues: Biotin synthase (345 aa).

Residues 38–256 (GEVQVSTLLS…IAVARIMMPR (219 aa)) enclose the Radical SAM core domain. The [4Fe-4S] cluster site is built by Cys53, Cys57, and Cys60. Cys97, Cys128, Cys188, and Arg260 together coordinate [2Fe-2S] cluster.

The protein belongs to the radical SAM superfamily. Biotin synthase family. Homodimer. Requires [4Fe-4S] cluster as cofactor. [2Fe-2S] cluster is required as a cofactor.

It catalyses the reaction (4R,5S)-dethiobiotin + (sulfur carrier)-SH + 2 reduced [2Fe-2S]-[ferredoxin] + 2 S-adenosyl-L-methionine = (sulfur carrier)-H + biotin + 2 5'-deoxyadenosine + 2 L-methionine + 2 oxidized [2Fe-2S]-[ferredoxin]. It functions in the pathway cofactor biosynthesis; biotin biosynthesis; biotin from 7,8-diaminononanoate: step 2/2. Catalyzes the conversion of dethiobiotin (DTB) to biotin by the insertion of a sulfur atom into dethiobiotin via a radical-based mechanism. This is Biotin synthase from Sodalis glossinidius (strain morsitans).